Here is a 465-residue protein sequence, read N- to C-terminus: Ras GTPase-activating protein-binding protein 1 (465 aa).

Residues 11-133 form the NTF2 domain; that stretch reads VGREFVRQYY…FYVHNDIFRY (123 aa). Residues lysine 36, lysine 50, lysine 59, lysine 64, lysine 76, and lysine 123 each participate in a glycyl lysine isopeptide (Lys-Gly) (interchain with G-Cter in ubiquitin) cross-link. Residues 142–224 form an acidic disordered region region; the sequence is ITEPQEESEE…EPVLEETAPE (83 aa). Residue threonine 143 is modified to Phosphothreonine. Composition is skewed to acidic residues over residues 145 to 157 and 184 to 205; these read PQEE…EEPE and EHLE…EQEP. Residues 145-242 are disordered; the sequence is PQEESEEEVE…APADIAQTVQ (98 aa). Serine 149 is modified (phosphoserine). Residues serine 230, serine 231, serine 249, and serine 252 each carry the phosphoserine modification. The disordered stretch occupies residues 254–326; the sequence is TSKNLPPSGA…PVREAGEQGD (73 aa). 2 stretches are compositionally biased toward basic and acidic residues: residues 296-306 and 317-326; these read PQRDQRVREQR and PVREAGEQGD. Residues 339 to 414 form the RRM domain; that stretch reads HQLFIGNLPH…VRLNVEEKKT (76 aa). Glycyl lysine isopeptide (Lys-Gly) (interchain with G-Cter in ubiquitin) cross-links involve residues lysine 352 and lysine 356. A Phosphoserine modification is found at serine 372. Lysine 375 is covalently cross-linked (Glycyl lysine isopeptide (Lys-Gly) (interchain with G-Cter in ubiquitin)). Residue lysine 375 is modified to N6-acetyllysine; alternate. Residue lysine 375 forms a Glycyl lysine isopeptide (Lys-Gly) (interchain with G-Cter in SUMO2); alternate linkage. Residue lysine 392 forms a Glycyl lysine isopeptide (Lys-Gly) (interchain with G-Cter in ubiquitin); alternate linkage. The RG-rich region stretch occupies residues 409–465; it reads VEEKKTRAAREGDRRDNRLRGPGGPRGGLGGGMRGPPRGGMVQKPGFGVGRSIAPRQ. Over residues 412-427 the composition is skewed to basic and acidic residues; it reads KKTRAAREGDRRDNRL. The segment at 412–465 is disordered; sequence KKTRAAREGDRRDNRLRGPGGPRGGLGGGMRGPPRGGMVQKPGFGVGRSIAPRQ. Asymmetric dimethylarginine is present on arginine 428. Residues 429 to 446 show a composition bias toward gly residues; the sequence is GPGGPRGGLGGGMRGPPR. Arginine 434 bears the Asymmetric dimethylarginine; alternate mark. Omega-N-methylarginine; alternate is present on residues arginine 434, arginine 446, arginine 459, and arginine 464. Position 459 is a dimethylated arginine; alternate (arginine 459).

In terms of assembly, homodimer and oligomer. Component of a TAU mRNP complex, at least composed of IGF2BP1, ELAVL4 and G3BP1. Binds to the SH3 domain of Ras GTPase-activating protein (RASA1) in proliferating cells. No interaction in quiescent cells. Interacts (via NTF2 domain) with USP10; inhibiting stress granule formation by lowering G3BP1 valence. Interacts (via NTF2 domain) with CAPRIN1; promoting stress granule formation by lowering the saturation-concentration of G3BP1. Interacts (via NTF2 domain) with UBAP2L; promoting stress granule formation. Associates (via RG-rich region) with 40S ribosome subunits. Interacts with RPTOR and SPAG5; this complex is increased by oxidative stress. Interacts with ATXN2L. Interacts with STYXL1. Interacts with CGAS (via N-terminus); this interaction promotes the DNA-binding and activation of CGAS. Interacts (via C-terminus) with RIGI. Interacts with PABPC1. Interacts with QKI (isoforms QKI6 and QKI7); directing N(7)-methylguanine-containing mRNAs to stress granules. Requires Mg(2+) as cofactor. Phosphorylation of the acidic disordered region regulates stress granule assembly. RASA1-dependent phosphorylation of Ser-149 induces a conformational change that prevents self-association. Dephosphorylation after HRAS activation is required for stress granule assembly. Ser-149 phosphorylation induces partial nuclear localization. In terms of processing, arg-435 is dimethylated, probably to asymmetric dimethylarginine. Post-translationally, ubiquitinated by TRIM21 via 'Lys-63'-linked polyubiquitination in the NTF2 domain in response to heat shock, leading to stress granule disassembly: ubiquitination promotes interaction with the FAF2 adapter, followed by interaction with VCP, which extracts G3BP1 from stress granules, leading to stress granule disassembly. In case of prolonged stress, ubiquitination by TRIM21 leads to autophagy-dependent degradation of G3BP1 via recruitment of ubiquitinated G3BP1 by SQSTM1 and/or CALCOCO2 to autophagosomes.

Its subcellular location is the cytoplasm. It is found in the cytosol. The protein localises to the perikaryon. It localises to the stress granule. The protein resides in the nucleus. It catalyses the reaction ATP + H2O = ADP + phosphate + H(+). Under physiological conditions, G3BP1 adopts a compact state that is stabilized by intramolecular interactions between the RG-rich and the acidic regions that inhibit phase separation. Upon stress, polysomes disassemble and mRNAs are released in an unfolded protein-free state. Binding of unfolded mRNA to G3BP1 outcompetes the intramolecular interactions and RNA-bound G3BP1 adopts an expanded conformation in which the RG-rich region becomes exposed to engage in protein-protein and protein-RNA interactions, allowing physical cross-linking of RNA molecules to form protein-RNA condensates, leading to liquid-liquid phase separation (LLPS). Functionally, protein involved in various processes, such as stress granule formation and innate immunity. Plays an essential role in stress granule formation. Stress granules are membraneless compartments that store mRNAs and proteins, such as stalled translation pre-initiation complexes, in response to stress. Promotes formation of stress granules phase-separated membraneless compartment by undergoing liquid-liquid phase separation (LLPS) upon unfolded RNA-binding: functions as a molecular switch that triggers RNA-dependent LLPS in response to a rise in intracellular free RNA concentrations. Also acts as an ATP- and magnesium-dependent helicase: unwinds DNA/DNA, RNA/DNA, and RNA/RNA substrates with comparable efficiency. Acts unidirectionally by moving in the 5' to 3' direction along the bound single-stranded DNA. Unwinds preferentially partial DNA and RNA duplexes having a 17 bp annealed portion and either a hanging 3' tail or hanging tails at both 5'- and 3'-ends. Plays an essential role in innate immunity by promoting CGAS and RIGI activity. Participates in the DNA-triggered cGAS/STING pathway by promoting the DNA binding and activation of CGAS. Triggers the condensation of cGAS, a process probably linked to the formation of membrane-less organelles. Also enhances RIGI-induced type I interferon production probably by helping RIGI at sensing pathogenic RNA. May also act as a phosphorylation-dependent sequence-specific endoribonuclease in vitro: Cleaves exclusively between cytosine and adenine and cleaves MYC mRNA preferentially at the 3'-UTR. The polypeptide is Ras GTPase-activating protein-binding protein 1 (G3BP1) (Bos taurus (Bovine)).